Here is a 626-residue protein sequence, read N- to C-terminus: Basic helix-loop-helix ARNT-like protein 1 (626 aa).

Residues Met-1–Arg-60 form a disordered region. A Phosphoserine; by GSK3-beta modification is found at Ser-17. Residues Ser-17–Gly-32 show a composition bias toward low complexity. Thr-21 bears the Phosphothreonine; by GSK3-beta mark. Residues Asn-36–Gly-41 carry the Nuclear localization signal motif. A compositionally biased stretch (basic and acidic residues) spans Asp-51–Arg-60. The region spanning Asn-72–Leu-125 is the bHLH domain. Ser-78 bears the Phosphoserine mark. Ser-90 carries the phosphoserine; by CK2 modification. A Nuclear export signal 1 motif is present at residues Leu-142 to Leu-152. The PAS 1 domain maps to Ser-143–Pro-215. Lys-252 is covalently cross-linked (Glycyl lysine isopeptide (Lys-Gly) (interchain with G-Cter in SUMO2 and SUMO3)). Residue Lys-259 forms a Glycyl lysine isopeptide (Lys-Gly) (interchain with G-Cter in SUMO2) linkage. Residues Pro-326–Arg-396 enclose the PAS 2 domain. A Nuclear export signal 2 motif is present at residues Leu-361–Leu-369. In terms of domain architecture, PAC spans Thr-401–Asn-444. Disordered regions lie at residues Ala-458–Gly-493 and Gly-511–Asn-595. Residues Ile-484–Gly-493 show a composition bias toward gly residues. The segment at Arg-508 to Gln-588 is interaction with CIART. Over residues Gly-511–Pro-521 the composition is skewed to low complexity. Lys-538 is subject to N6-acetyllysine.

In terms of assembly, component of the circadian clock oscillator which includes the CRY1/2 proteins, CLOCK or NPAS2,BMAL1 or BMAL2, CSNK1D and/or CSNK1E, TIMELESS and the PER1/2/3 proteins. Forms a heterodimer with CLOCK. The CLOCK-BMAL1 heterodimer is required for E-box-dependent transactivation, for CLOCK nuclear translocation and degradation, and, for phosphorylation of both CLOCK and BMAL1. Part of a nuclear complex which also includes RACK1 and PRKCA; RACK1 and PRKCA are recruited to the complex in a circadian manner. Interacts with NPAS2. Interacts with EZH2. Interacts with SUMO3. Interacts with SIRT1. Interacts with AHR. Interacts with ID1, ID2 and ID3. Interacts with DDX4. Interacts with OGT. Interacts with EED and SUZ12. Interacts with MTA1. Interacts with CIART. Interacts with HSP90. Interacts with KAT2B and EP300. Interacts with BHLHE40/DEC1 and BHLHE41/DEC2. Interacts with RELB and the interaction is enhanced in the presence of CLOCK. Interacts with PER1, PER2, CRY1 and CRY2 and this interaction requires a translocation to the nucleus. Interaction of the CLOCK-BMAL1 heterodimer with PER or CRY inhibits transcription activation. Interaction of the CLOCK-BMAL1 with CRY1 is independent of DNA but with PER2 is off DNA. The CLOCK-BMAL1 heterodimer interacts with GSK3B. Interacts with KDM5A. Interacts with KMT2A; in a circadian manner. Interacts with UBE3A. Interacts with PRKCG. Interacts with MAGEL2. Interacts with NCOA2. Interacts with THRAP3. The CLOCK-BMAL1 heterodimer interacts with PASD1. Interacts with PASD1. Interacts with USP9X. Interacts with PIWIL2 (via PIWI domain). Interacts with HDAC3. Interacts with HNF4A. Post-translationally, ubiquitinated, leading to its proteasomal degradation. Deubiquitinated by USP9X. In terms of processing, O-glycosylated; contains O-GlcNAc. O-glycosylation by OGT prevents protein degradation by inhibiting ubiquitination. It also stabilizes the CLOCK-BMAL1 heterodimer thereby increasing CLOCK-BMAL1-mediated transcription of genes in the negative loop of the circadian clock such as PER1/2/3 and CRY1/2. Acetylated on Lys-538 by CLOCK during the repression phase of the circadian cycle. Acetylation facilitates recruitment of CRY1 protein and initiates the repression phase of the circadian cycle. Acetylated at Lys-538 by KAT5 during the activation phase of the cycle, leading to recruitment of the positive transcription elongation factor b (P-TEFb) and BRD4, followed by productive elongation of circadian transcripts. Deacetylated by SIRT1, which may result in decreased protein stability. Post-translationally, phosphorylated upon dimerization with CLOCK. Phosphorylation enhances the transcriptional activity, alters the subcellular localization and decreases the stability of the CLOCK-BMAL1 heterodimer by promoting its degradation. Phosphorylation shows circadian variations in the liver with a peak between CT10 to CT14. Phosphorylation at Ser-90 by CK2 is essential for its nuclear localization, its interaction with CLOCK and controls CLOCK nuclear entry. Dephosphorylation at Ser-78 is important for dimerization with CLOCK and transcriptional activity. In terms of processing, sumoylated on Lys-259 upon dimerization with CLOCK. Predominantly conjugated to poly-SUMO2/3 rather than SUMO1 and the level of these conjugates undergo rhythmic variation, peaking at CT9-CT12. Sumoylation localizes it exclusively to the PML body and promotes its ubiquitination in the PML body, ubiquitin-dependent proteasomal degradation and the transcriptional activity of the CLOCK-BMAL1 heterodimer. Undergoes lysosome-mediated degradation in a time-dependent manner in the liver. As to expression, hair follicles (at protein level). Highly expressed in the adult brain, skeletal muscle and heart.

It localises to the nucleus. The protein resides in the cytoplasm. The protein localises to the PML body. With respect to regulation, there is conflicting data about the effect of NAD cofactors on activity. PubMed:11441146 suggests that the redox state of the cell can modulate the transcriptional activity of the CLOCK-BMAL1 heterodimer; NADH and NADPH enhance the DNA-binding activity of the heterodimer. PubMed:23229515 reports that NADH and NADPH have no significant effect on DNA-binding activity of the CLOCK-BMAL1 heterodimer. Transcriptional activator which forms a core component of the circadian clock. The circadian clock, an internal time-keeping system, regulates various physiological processes through the generation of approximately 24 hour circadian rhythms in gene expression, which are translated into rhythms in metabolism and behavior. It is derived from the Latin roots 'circa' (about) and 'diem' (day) and acts as an important regulator of a wide array of physiological functions including metabolism, sleep, body temperature, blood pressure, endocrine, immune, cardiovascular, and renal function. Consists of two major components: the central clock, residing in the suprachiasmatic nucleus (SCN) of the brain, and the peripheral clocks that are present in nearly every tissue and organ system. Both the central and peripheral clocks can be reset by environmental cues, also known as Zeitgebers (German for 'timegivers'). The predominant Zeitgeber for the central clock is light, which is sensed by retina and signals directly to the SCN. The central clock entrains the peripheral clocks through neuronal and hormonal signals, body temperature and feeding-related cues, aligning all clocks with the external light/dark cycle. Circadian rhythms allow an organism to achieve temporal homeostasis with its environment at the molecular level by regulating gene expression to create a peak of protein expression once every 24 hours to control when a particular physiological process is most active with respect to the solar day. Transcription and translation of core clock components (CLOCK, NPAS2, BMAL1, BMAL2, PER1, PER2, PER3, CRY1 and CRY2) plays a critical role in rhythm generation, whereas delays imposed by post-translational modifications (PTMs) are important for determining the period (tau) of the rhythms (tau refers to the period of a rhythm and is the length, in time, of one complete cycle). A diurnal rhythm is synchronized with the day/night cycle, while the ultradian and infradian rhythms have a period shorter and longer than 24 hours, respectively. Disruptions in the circadian rhythms contribute to the pathology of cardiovascular diseases, cancer, metabolic syndromes and aging. A transcription/translation feedback loop (TTFL) forms the core of the molecular circadian clock mechanism. Transcription factors, CLOCK or NPAS2 and BMAL1 or BMAL2, form the positive limb of the feedback loop, act in the form of a heterodimer and activate the transcription of core clock genes and clock-controlled genes (involved in key metabolic processes), harboring E-box elements (5'-CACGTG-3') within their promoters. The core clock genes: PER1/2/3 and CRY1/2 which are transcriptional repressors form the negative limb of the feedback loop and interact with the CLOCK|NPAS2-BMAL1|BMAL2 heterodimer inhibiting its activity and thereby negatively regulating their own expression. This heterodimer also activates nuclear receptors NR1D1/2 and RORA/B/G, which form a second feedback loop and which activate and repress BMAL1 transcription, respectively. BMAL1 positively regulates myogenesis and negatively regulates adipogenesis via the transcriptional control of the genes of the canonical Wnt signaling pathway. Plays a role in normal pancreatic beta-cell function; regulates glucose-stimulated insulin secretion via the regulation of antioxidant genes NFE2L2/NRF2 and its targets SESN2, PRDX3, CCLC and CCLM. Negatively regulates the mTORC1 signaling pathway; regulates the expression of MTOR and DEPTOR. Controls diurnal oscillations of Ly6C inflammatory monocytes; rhythmic recruitment of the PRC2 complex imparts diurnal variation to chemokine expression that is necessary to sustain Ly6C monocyte rhythms. Regulates the expression of HSD3B2, STAR, PTGS2, CYP11A1, CYP19A1 and LHCGR in the ovary and also the genes involved in hair growth. Plays an important role in adult hippocampal neurogenesis by regulating the timely entry of neural stem/progenitor cells (NSPCs) into the cell cycle and the number of cell divisions that take place prior to cell-cycle exit. Regulates the circadian expression of CIART and KLF11. The CLOCK-BMAL1 heterodimer regulates the circadian expression of SERPINE1/PAI1, VWF, B3, CCRN4L/NOC, NAMPT, DBP, MYOD1, PPARGC1A, PPARGC1B, SIRT1, GYS2, F7, NGFR, GNRHR, BHLHE40/DEC1, ATF4, MTA1, KLF10 and also genes implicated in glucose and lipid metabolism. Promotes rhythmic chromatin opening, regulating the DNA accessibility of other transcription factors. The NPAS2-BMAL1 heterodimer positively regulates the expression of MAOA, F7 and LDHA and modulates the circadian rhythm of daytime contrast sensitivity by regulating the rhythmic expression of adenylate cyclase type 1 (ADCY1) in the retina. The preferred binding motif for the CLOCK-BMAL1 heterodimer is 5'-CACGTGA-3', which contains a flanking adenine nucleotide at the 3-prime end of the canonical 6-nucleotide E-box sequence. CLOCK specifically binds to the half-site 5'-CAC-3', while BMAL1 binds to the half-site 5'-GTGA-3'. The CLOCK-BMAL1 heterodimer also recognizes the non-canonical E-box motifs 5'-AACGTGA-3' and 5'-CATGTGA-3'. Essential for the rhythmic interaction of CLOCK with ASS1 and plays a critical role in positively regulating CLOCK-mediated acetylation of ASS1. Plays a role in protecting against lethal sepsis by limiting the expression of immune checkpoint protein CD274 in macrophages in a PKM2-dependent manner. Regulates the diurnal rhythms of skeletal muscle metabolism via transcriptional activation of genes promoting triglyceride synthesis (DGAT2) and metabolic efficiency (COQ10B). In terms of biological role, (Microbial infection) Regulates SARS coronavirus-2/SARS-CoV-2 entry and replication in lung epithelial cells probably through the post-transcriptional regulation of ACE2 and interferon-stimulated gene expression. The protein is Basic helix-loop-helix ARNT-like protein 1 of Homo sapiens (Human).